The following is a 352-amino-acid chain: 4-hydroxy-2-oxovalerate aldolase 5 (352 aa).

In terms of domain architecture, Pyruvate carboxyltransferase spans 9–261 (IRVTDSSLRD…RTGIDTLKII (253 aa)). 17-18 (RD) contacts substrate. Asp18 serves as a coordination point for Mn(2+). Catalysis depends on His21, which acts as the Proton acceptor. 2 residues coordinate substrate: Ser171 and His200. Mn(2+)-binding residues include His200 and His202. Tyr291 is a substrate binding site.

Belongs to the 4-hydroxy-2-oxovalerate aldolase family.

It carries out the reaction (S)-4-hydroxy-2-oxopentanoate = acetaldehyde + pyruvate. The sequence is that of 4-hydroxy-2-oxovalerate aldolase 5 from Rhodococcus opacus (strain B4).